Here is a 441-residue protein sequence, read N- to C-terminus: Cysteine--tRNA ligase (441 aa).

Position 24 (Cys-24) interacts with Zn(2+). Positions 26-36 (PTVYNYIHIGN) match the 'HIGH' region motif. Positions 204, 230, and 234 each coordinate Zn(2+). The 'KMSKS' region signature appears at 262 to 266 (KMSKS). Lys-265 provides a ligand contact to ATP.

This sequence belongs to the class-I aminoacyl-tRNA synthetase family. In terms of assembly, monomer. Zn(2+) is required as a cofactor.

It localises to the cytoplasm. It catalyses the reaction tRNA(Cys) + L-cysteine + ATP = L-cysteinyl-tRNA(Cys) + AMP + diphosphate. The chain is Cysteine--tRNA ligase from Mycoplasma mycoides subsp. mycoides SC (strain CCUG 32753 / NCTC 10114 / PG1).